The chain runs to 255 residues: Transmembrane protein 81 (255 aa).

The signal sequence occupies residues 1-30 (MKVLATSFVLGSLGLAFYLPLVVTTPKTLA). Residues 31–226 (IPEKLQEAVG…HPKWKKKVAS (196 aa)) lie on the Extracellular side of the membrane. N-linked (GlcNAc...) asparagine glycosylation is present at N45. The region spanning 83–171 (TNWICGMLHF…VQLVKNLRLV (89 aa)) is the Ig-like domain. A disulfide bond links C104 and C160. The helical transmembrane segment at 227 to 247 (ALGIGIAIGVVGGVLVRIVLC) threads the bilayer. Topologically, residues 248–255 (ALRGGLQQ) are cytoplasmic.

In terms of assembly, forms a complex with IZUMO1 and SPACA6 on spermatocyte cell membrane required for fertilization. As to expression, highly expressed in sperm (at protein level).

The protein resides in the cell membrane. Its function is as follows. Essential fertilization factor required for male fertility. Part of a conserved trimeric sperm complex with the essential fertilization factors IZUMO1 and SPACA6 which bridges sperm and oocyte membranes during fertilization by binding to IZUMO1R/JUNO on the oocyte. The protein is Transmembrane protein 81 of Homo sapiens (Human).